Reading from the N-terminus, the 309-residue chain is MRKKISIIGAGFVGSTTAHWLAAKELGDIVLLDIVEGIPQGKALDLYEASPIEDFDVRVIGTNDYADTANSDVIVVTSGAPRKPGMSREDLIKVNADITRDCISKAAPLSPNAVIIMVNNPLDAMTYLAAEVSGFPKERVMGQAGVLDAARYRTFIAMEAGVSVEDVQAMLMGGHGDEMVPLPRFSTISGIPVSHFIAPDRLAQIIERTRKGGGEIVNLLKTGSAYYAPAAATAQMVEAVLKDKKRVVPVAAYLTGQYGLHDMYFGVPVVLGAGGVEKIIELPLNEEEMALLNASAKAVRATLDTLKSL.

NAD(+) is bound by residues 9-14 and Asp33; that span reads GAGFVG. Residues Arg82 and Arg88 each contribute to the substrate site. Residues Asn95 and 118–120 each bind NAD(+); that span reads VNN. The substrate site is built by Asn120 and Arg151. The active-site Proton acceptor is His175.

It belongs to the LDH/MDH superfamily. MDH type 3 family.

It carries out the reaction (S)-malate + NAD(+) = oxaloacetate + NADH + H(+). In terms of biological role, catalyzes the reversible oxidation of malate to oxaloacetate. The polypeptide is Malate dehydrogenase (Chloroflexus aggregans (strain MD-66 / DSM 9485)).